We begin with the raw amino-acid sequence, 359 residues long: L-seryl-tRNA(Sec) kinase (359 aa).

Residue 25–32 (GLPAAGKS) coordinates ATP.

The protein belongs to the L-seryl-tRNA(Sec) kinase family. Requires Mg(2+) as cofactor.

The catalysed reaction is L-seryl-tRNA(Sec) + ATP = O-phospho-L-seryl-tRNA(Sec) + ADP. It functions in the pathway aminoacyl-tRNA biosynthesis; selenocysteinyl-tRNA(Sec) biosynthesis; selenocysteinyl-tRNA(Sec) from L-seryl-tRNA(Sec) (archaeal/eukaryal route): step 1/2. Its function is as follows. Specifically phosphorylates seryl-tRNA(Sec) to O-phosphoseryl-tRNA(Sec), an activated intermediate for selenocysteine biosynthesis. No activity with other tRNAs has been detected. The sequence is that of L-seryl-tRNA(Sec) kinase (Pstk) from Mus musculus (Mouse).